A 447-amino-acid chain; its full sequence is Chitobiosyldiphosphodolichol beta-mannosyltransferase (447 aa).

Topologically, residues 1–2 (MT) are cytoplasmic. The chain crosses the membrane as a helical; Signal-anchor for type II membrane protein span at residues 3-23 (LVLLLSIFAICFSSVAFIQLL). The Lumenal segment spans residues 24 to 447 (PTRREKKSSE…IAGTFLGLVT (424 aa)).

The protein belongs to the glycosyltransferase group 1 family. Glycosyltransferase 33 subfamily.

Its subcellular location is the endoplasmic reticulum membrane. It carries out the reaction an N,N'-diacetylchitobiosyl-diphospho-di-trans,poly-cis-dolichol + GDP-alpha-D-mannose = a beta-D-Man-(1-&gt;4)-beta-D-GlcNAc-(1-&gt;4)-alpha-D-GlcNAc-diphospho-di-trans,poly-cis-dolichol + GDP + H(+). The protein operates within protein modification; protein glycosylation. Its function is as follows. Participates in the formation of the lipid-linked precursor oligosaccharide for N-glycosylation. Involved in assembling the dolichol-pyrophosphate-GlcNAc(2)-Man(5) intermediate on the cytoplasmic surface of the ER. This Arthroderma benhamiae (strain ATCC MYA-4681 / CBS 112371) (Trichophyton mentagrophytes) protein is Chitobiosyldiphosphodolichol beta-mannosyltransferase.